A 1083-amino-acid polypeptide reads, in one-letter code: Centrosomal protein of 131 kDa (1083 aa).

Disordered regions lie at residues 1–155 (MKGT…AGPR) and 220–258 (GSESSGFGKLPKNVSSATHSARNNTGGSTGLPRRKEVTE). An interaction with PLK4 region spans residues 1–250 (MKGTRAIGSV…RNNTGGSTGL (250 aa)). A phosphoserine mark is found at Ser14 and Ser35. Residue Ser47 is modified to Phosphoserine; by MAPKAPK2. The span at 68-87 (QAINNLRRSNSTTQVSQPRS) shows a compositional bias: polar residues. The residue at position 78 (Ser78) is a Phosphoserine; by MAPKAPK2 and PLK4. Residues Ser89, Ser105, Ser114, Ser146, and Ser150 each carry the phosphoserine modification. Residues 138 to 148 (LPSNARSSSAL) show a composition bias toward polar residues. Over residues 232–245 (NVSSATHSARNNTG) the composition is skewed to polar residues. Residues 269–289 (NQATVTIQRWYRHQVQRRGAG) form the IQ domain. A disordered region spans residues 301 to 429 (REEQRQRSGE…PQQPPEDRTQ (129 aa)). 2 stretches are compositionally biased toward basic and acidic residues: residues 317–333 (HQQKEAARRKAREEKAR) and 360–369 (GPPENPRETR). Position 381 is a phosphoserine (Ser381). Phosphothreonine is present on Thr383. 6 positions are modified to phosphoserine: Ser453, Ser489, Asp496, Ser499, Ser731, and Ser798. Residues 1047–1076 (KEEAVSSLRTQHEAAVKRADHLEELLEQHR) are compositionally biased toward basic and acidic residues. The segment at 1047-1083 (KEEAVSSLRTQHEAAVKRADHLEELLEQHRRPTPSTK) is disordered.

It belongs to the CEP131 family. Self-associates. Associates with the centriolar satellite BBSome protein complex. Interacts with BBS4; the interaction limits BBS4 availability for association with the BBSome complex, and hence negatively regulates ciliary localization of the BBSome complex. Interacts with MIB1. Interacts with PCM1; the interaction increases in response to ultraviolet light (UV) radiation. Associates with microtubules; association with microtubules is reduced in response to cellular stress, such as UV stimulation, in a process that requires p38 MAP kinase signaling. Interacts with CEP290, DCTN1, PCNT, PCM1 and CEP152. Interacts with 14-3-3 proteins following UV-induced phosphorylation by MAPKAPK2; this inhibits formation of novel centriolar satellites. Interacts with SDCCAG8. Interacts with CCDC61. Interacts with PLK4. Ubiquitinated. Undergoes monoubiquitination catalyzed by the E3 ubiquitin-protein ligase MIB1 in proliferating cells, preventing cilia formation. Monoubiquitination by MIB1 is inhibited in response to cellular stress, such as ultraviolet light (UV) radiation or heat shock, resulting in cilia formation initiation. Post-translationally, MAPKAPK2-dependent phosphorylation at Ser-47 and Ser-78 occurs in response to cellular stress such as exposure to ultraviolet irradiation and promotes binding to 14-3-3 proteins which leads to cytoplasmic sequestration of CEP131 and blocks formation of new centriolar satellites. Phosphorylation at Ser-78 mediated by PLK4 is essential for proper organization and integrity of centriolar satellites but is dispensable for its localization to centrioles and its function in ciliogenesis.

It is found in the cytoplasm. It localises to the cytoskeleton. The protein localises to the microtubule organizing center. Its subcellular location is the centrosome. The protein resides in the centriolar satellite. It is found in the centriole. It localises to the cilium basal body. The protein localises to the cytoplasmic vesicle. Its subcellular location is the secretory vesicle. The protein resides in the acrosome. Its function is as follows. Component of centriolar satellites contributing to the building of a complex and dynamic network required to regulate cilia/flagellum formation. In proliferating cells, MIB1-mediated ubiquitination induces its sequestration within centriolar satellites, precluding untimely cilia formation initiation. In contrast, during normal and ultraviolet or heat shock cellular stress-induced ciliogenesis, its non-ubiquitinated form is rapidly displaced from centriolar satellites and recruited to centrosome/basal bodies in a microtubule- and p38 MAPK-dependent manner. Also acts as a negative regulator of BBSome ciliary trafficking. Plays a role in sperm flagellar formation; may be involved in the regulation of intraflagellar transport (IFT) and/or intramanchette (IMT) trafficking, which are important for axoneme extension and/or cargo delivery to the nascent sperm tail. Required for optimal cell proliferation and cell cycle progression; may play a role in the regulation of genome stability in non-ciliogenic cells. Involved in centriole duplication. Required for CEP152, WDR62 and CEP63 centrosomal localization and promotes the centrosomal localization of CDK2. Essential for maintaining proper centriolar satellite integrity. The chain is Centrosomal protein of 131 kDa (CEP131) from Homo sapiens (Human).